The primary structure comprises 90 residues: Co-chaperonin GroES (90 aa).

The protein belongs to the GroES chaperonin family. Heptamer of 7 subunits arranged in a ring. Interacts with the chaperonin GroEL.

The protein localises to the cytoplasm. Its function is as follows. Together with the chaperonin GroEL, plays an essential role in assisting protein folding. The GroEL-GroES system forms a nano-cage that allows encapsulation of the non-native substrate proteins and provides a physical environment optimized to promote and accelerate protein folding. GroES binds to the apical surface of the GroEL ring, thereby capping the opening of the GroEL channel. This chain is Co-chaperonin GroES, found in Fusobacterium nucleatum subsp. nucleatum (strain ATCC 25586 / DSM 15643 / BCRC 10681 / CIP 101130 / JCM 8532 / KCTC 2640 / LMG 13131 / VPI 4355).